The primary structure comprises 284 residues: MKYVGAHVSASGGLANAAIRAAEIEATAFALFTKNQRQWRAAPLSDETIAEFKAACEKYHFGPGQILPHDSYLINLGHPVEEALEKSRDAFIDEMTRCQQLGLTLLNFHPGSHLQQIPEEACLARIAESINIALAKTEGVTAVIENTAGQGSNLGFKFEHLAAIIDGVEDKSRVGVCIDTCHAFAAGYDLRSAEACEKTFADFERIVGFQYLRGMHLNDAKSTFGSRVDRHHSLGEGNIGHDCFRWIMQDSRFNGIPLILETINPDIWAEEIAWLRAQQIAEVA.

Zn(2+)-binding residues include His69, His109, Glu145, Asp179, His182, His216, Asp229, His231, and Glu261.

The protein belongs to the AP endonuclease 2 family. It depends on Zn(2+) as a cofactor.

The enzyme catalyses Endonucleolytic cleavage to 5'-phosphooligonucleotide end-products.. In terms of biological role, endonuclease IV plays a role in DNA repair. It cleaves phosphodiester bonds at apurinic or apyrimidinic (AP) sites, generating a 3'-hydroxyl group and a 5'-terminal sugar phosphate. In Klebsiella pneumoniae (strain 342), this protein is Probable endonuclease 4.